Reading from the N-terminus, the 644-residue chain is Zinc transporter ZIP4 (644 aa).

The first 27 residues, 1 to 27 (MAILAWLEPRPLLAVLVLVLTMRMAQP), serve as a signal peptide directing secretion. Over 28–323 (AHLLTLLSSG…QNQLSQAEKY (296 aa)) the chain is Extracellular. 3 disulfides stabilise this stretch: Cys-59-Cys-64, Cys-67-Cys-103, and Cys-153-Cys-188. Residues 231–259 (TETHSDHHHQEKRVNRQGPTPLTAPNSSS) are disordered. The segment covering 233 to 244 (THSDHHHQEKRV) has biased composition (basic and acidic residues). The span at 247-259 (QGPTPLTAPNSSS) shows a compositional bias: polar residues. Cysteines 266 and 305 form a disulfide. A helical transmembrane segment spans residues 324–344 (LYGSLATLLICLCSTFGLLLL). The Cytoplasmic segment spans residues 345–355 (TCAACSTAAHY). Residues 356-376 (VIQTFLGMAVGALTGDALLHL) form a helical membrane-spanning segment. At 377–404 (TPKVLGLHQHGGDSEHRADSHGPQTTWR) the chain is on the extracellular side. Residues 405-425 (LVVALSGLYVFFLFEKLCDLL) form a helical membrane-spanning segment. Residues 426–495 (LPQDPEDRKG…KSPELRLLPY (70 aa)) are Cytoplasmic-facing. Positions 449 to 451 (LQL) match the Essential for SLC39A4 endocytosis motif. A compositionally biased stretch (basic and acidic residues) spans 456–467 (LRPPKQPHEGSR). A disordered region spans residues 456–484 (LRPPKQPHEGSRADLVAEESPELLSPEPR). Residues 496-515 (MITLGDGLHNFADGLAVGAA) form a helical membrane-spanning segment. His-504, Asn-505, and Asp-508 together coordinate Zn(2+). At 516–523 (FASSWKTG) the chain is on the extracellular side. Residues 524–550 (LATSLAVFCHEVPHELGDFAALLHAGL) traverse the membrane as a helical segment. Zn(2+) is bound by residues His-533, Glu-534, and His-537. Over 551–555 (PVSRA) the chain is Cytoplasmic. A helical transmembrane segment spans residues 556-576 (LLLNLASGLTAFAGLYVALAL). The Extracellular segment spans residues 577–583 (GVGEESE). The helical transmembrane segment at 584–604 (SWTLAVAIGLFLYVALCDMLP) threads the bilayer. Topologically, residues 605–614 (AMLNVRDPRP) are cytoplasmic. A helical membrane pass occupies residues 615–635 (WLLFLLHNVGLLGGWAVLLLL). The Extracellular portion of the chain corresponds to 636 to 644 (SLYEDSIAL).

The protein belongs to the ZIP transporter (TC 2.A.5) family. Homodimer. The extracellular N-terminal ectodomain is cleaved when cells are Zn(2+) deficient, N-terminally cleaved SLC39A4 is internalized at a faster rate. In terms of processing, under excess Zn(2+) conditions, SLC39A4 on the cell surface is rapidly endocytosed, ubiquitinated and degraded. Post-translationally, glycosylated.

The protein resides in the cell membrane. It localises to the recycling endosome membrane. The protein localises to the apical cell membrane. The enzyme catalyses Zn(2+)(in) = Zn(2+)(out). Selective transporter that mediates the uptake of Zn(2+). Plays an essential role for dietary zinc uptake from small intestine. The Zn(2+) uniporter activity is regulated by zinc availability. Also exhibits polyspecific binding and transport of Cu(2+), Cd(2+) and possibly Ni(2+) but at higher concentrations. The polypeptide is Zinc transporter ZIP4 (Pteropus alecto (Black flying fox)).